The sequence spans 371 residues: DNA replication and repair protein RecF (371 aa).

Residue 30–37 participates in ATP binding; the sequence is GENAQGKT.

It belongs to the RecF family.

It localises to the cytoplasm. Its function is as follows. The RecF protein is involved in DNA metabolism; it is required for DNA replication and normal SOS inducibility. RecF binds preferentially to single-stranded, linear DNA. It also seems to bind ATP. The sequence is that of DNA replication and repair protein RecF from Staphylococcus epidermidis (strain ATCC 35984 / DSM 28319 / BCRC 17069 / CCUG 31568 / BM 3577 / RP62A).